Here is a 102-residue protein sequence, read N- to C-terminus: Phosphoribosyl-ATP pyrophosphatase (102 aa).

This sequence belongs to the PRA-PH family.

The protein localises to the cytoplasm. The catalysed reaction is 1-(5-phospho-beta-D-ribosyl)-ATP + H2O = 1-(5-phospho-beta-D-ribosyl)-5'-AMP + diphosphate + H(+). The protein operates within amino-acid biosynthesis; L-histidine biosynthesis; L-histidine from 5-phospho-alpha-D-ribose 1-diphosphate: step 2/9. In Dinoroseobacter shibae (strain DSM 16493 / NCIMB 14021 / DFL 12), this protein is Phosphoribosyl-ATP pyrophosphatase.